Here is a 168-residue protein sequence, read N- to C-terminus: Cyanate hydratase (168 aa).

Active-site residues include Arg-91, Glu-94, and Ser-117.

It belongs to the cyanase family.

The catalysed reaction is cyanate + hydrogencarbonate + 3 H(+) = NH4(+) + 2 CO2. In terms of biological role, catalyzes the reaction of cyanate with bicarbonate to produce ammonia and carbon dioxide. The polypeptide is Cyanate hydratase (Arabidopsis thaliana (Mouse-ear cress)).